Consider the following 236-residue polypeptide: Penton protein H240R (236 aa).

The protein belongs to the asfivirus H240R family.

It localises to the virion. Its function is as follows. Forms the penton at the fivefold vertices of the icosahedral capsid. Together with the minor capsid proteins (p17, p49, and M1249L), forms a complicated network immediately below the outer capsid shell, stabilizing the whole capsid. The polypeptide is Penton protein H240R (African swine fever virus (isolate Warthog/Namibia/Wart80/1980) (ASFV)).